Reading from the N-terminus, the 117-residue chain is MLTFNKMKTTTCSLLICISLLQLMVPVNTEGTLESIVEKKVKELLANRDDCPSTVTKTFSCTSITASGRLASCPSGMTVTGCACGYGCGSWDIRDGNTCHCQCSTMDWATARCCQLA.

The N-terminal stretch at 1-29 is a signal peptide; that stretch reads MLTFNKMKTTTCSLLICISLLQLMVPVNT. Cystine bridges form between Cys-61–Cys-114, Cys-73–Cys-113, Cys-82–Cys-99, Cys-84–Cys-101, and Cys-88–Cys-103.

Belongs to the resistin/FIZZ family. As to quaternary structure, homodimer. Heterodimer with RETNLB. In terms of tissue distribution, expressed in colon, lung, spleen, pancreas, ileum and bone marrow (at protein level). In colon, found throughout the crypt and surface epithelium, including goblet cells (at protein level). Highest expression is observed in bone marrow, spleen and lung, with lower levels in other tissues. Detected at low levels in granulocytes, but not found in monocytes or lymphocytes. Has very weak expression in white adipose tissue.

It is found in the secreted. Functionally, probable hormone. Promotes chemotaxis in myeloid cells. The protein is Resistin-like gamma of Mus musculus (Mouse).